The sequence spans 283 residues: Elongation factor Ts (283 aa).

The involved in Mg(2+) ion dislocation from EF-Tu stretch occupies residues 80–83; the sequence is TDFV.

This sequence belongs to the EF-Ts family.

It localises to the cytoplasm. In terms of biological role, associates with the EF-Tu.GDP complex and induces the exchange of GDP to GTP. It remains bound to the aminoacyl-tRNA.EF-Tu.GTP complex up to the GTP hydrolysis stage on the ribosome. This is Elongation factor Ts from Haemophilus ducreyi (strain 35000HP / ATCC 700724).